Here is a 614-residue protein sequence, read N- to C-terminus: Vitamin B12 transporter BtuB (614 aa).

The first 20 residues, Met1–Ala20, serve as a signal peptide directing secretion. Positions Asp26–Asn33 match the TonB box motif. In terms of domain architecture, TBDR plug spans Pro38–Thr152. Cyanocob(III)alamin contacts are provided by residues Ser85, Asn92, and Val110 to Ser111. Residues Asn155–Phe614 enclose the TBDR beta-barrel domain. 3 consecutive transmembrane segments (beta stranded) span residues Thr158–Gly165, Tyr169–Gln178, and Thr184–Thr195. Residues Asp199, Gln211, Asp213, and Asp215 each coordinate Ca(2+). 2 beta stranded membrane passes run Phe217–Glu227 and Asp232–Asp248. Ca(2+)-binding residues include Tyr249 and Asp250. Ala251 provides a ligand contact to cyanocob(III)alamin. Residue Asp261 coordinates Ca(2+). The next 14 membrane-spanning stretches (beta stranded) occupy residues Arg263–Asn277, Glu279–Asn296, Thr309–Val325, His328–Trp337, Tyr353–Gly369, Phe371–Asp381, Phe385–Ile400, Tyr403–Asn417, Lys434–Glu443, Val449–Asn458, Tyr473–Phe490, Pro494–Ala509, Arg517–Trp529, and Asp535–Asp550. Thr309 is a binding site for cyanocob(III)alamin. Residue Arg517 coordinates cyanocob(III)alamin. Residue Tyr551 participates in cyanocob(III)alamin binding. Beta stranded transmembrane passes span Thr558–Ala572, Ile585–Val596, and Ala602–Phe614. Residues Tyr597 to Phe614 carry the TonB C-terminal box motif.

The protein belongs to the TonB-dependent receptor family. BtuB (TC 1.B.14.3.1) subfamily.

Its subcellular location is the cell outer membrane. Its function is as follows. Involved in the active translocation of vitamin B12 (cyanocobalamin) across the outer membrane to the periplasmic space. It derives its energy for transport by interacting with the trans-periplasmic membrane protein TonB. The protein is Vitamin B12 transporter BtuB of Salmonella choleraesuis (strain SC-B67).